The sequence spans 316 residues: UPF0324 membrane protein SO_4708 (316 aa).

9 consecutive transmembrane segments (helical) span residues 61–80 (LLSYSIIGLGFGINLTAAIE), 85–107 (NLGLIIGSIIFTLILGFIVTRAL), 114–136 (GHLIASGTAICGGSAIAAVAPAV), 146–168 (ALACVFVLNSVALFLFPALGHLL), 175–197 (FGVWSAIAIHDTSSVVGAASAYG), 207–226 (IKLARALWIIPIALVSALIF), 233–252 (LNLPYFIGFYCLAIAIAHWL), 262–281 (LFMVSKHTLVLCLFLIGAGI), and 293–315 (PLLLGVILWMAIGVTSLAYILYF).

This sequence belongs to the UPF0324 family.

The protein resides in the cell membrane. The sequence is that of UPF0324 membrane protein SO_4708 from Shewanella oneidensis (strain ATCC 700550 / JCM 31522 / CIP 106686 / LMG 19005 / NCIMB 14063 / MR-1).